Here is a 147-residue protein sequence, read N- to C-terminus: Nitric oxide reductase subunit C (147 aa).

Residues Val13–Thr29 traverse the membrane as a helical; Signal-anchor segment. 3 residues coordinate heme c: Cys59, Cys62, and His63.

In terms of assembly, heterodimer of cytochromes b (large subunit) and c (small subunit).

The protein localises to the cell membrane. Functionally, component of the anaerobic respiratory chain that transforms nitrate to dinitrogen (denitrification). The protein is Nitric oxide reductase subunit C (norC) of Cereibacter sphaeroides (strain ATCC 17025 / ATH 2.4.3) (Rhodobacter sphaeroides).